We begin with the raw amino-acid sequence, 578 residues long: Asparagine synthetase [glutamine-hydrolyzing] 3 (578 aa).

Residue cysteine 2 is the For GATase activity of the active site. In terms of domain architecture, Glutamine amidotransferase type-2 spans 2–185; it reads CGILAVLGCV…PGHIYSSKQG (184 aa). L-glutamine contacts are provided by residues 50-54, 75-77, and aspartate 98; these read RLAIV and NGE. Residues 210 to 450 enclose the Asparagine synthetase domain; that stretch reads VRNTFEKAVI…LPKHILYRQK (241 aa). ATP contacts are provided by residues leucine 231, isoleucine 267, and 341 to 342; that span reads SG. Over residues 555-572 the composition is skewed to basic and acidic residues; sequence GEDKTEDSRPEKLQKLAE. The disordered stretch occupies residues 555–578; it reads GEDKTEDSRPEKLQKLAEKTPAIV.

The catalysed reaction is L-aspartate + L-glutamine + ATP + H2O = L-asparagine + L-glutamate + AMP + diphosphate + H(+). It functions in the pathway amino-acid biosynthesis; L-asparagine biosynthesis. Functionally, essential for nitrogen assimilation, distribution and remobilization within the plant via the phloem. The chain is Asparagine synthetase [glutamine-hydrolyzing] 3 (ASN3) from Arabidopsis thaliana (Mouse-ear cress).